We begin with the raw amino-acid sequence, 505 residues long: MTQRKVRVRFAPSPTGALHIGGVRTALYNYLFAKQNGGDMILRIEDTDSQRFVPGAEDYIIEALTWLGIKFDEGVSFGGNYGPYRQSERREIYKKYVDQLLNDGHAYIAFDTPAELEEKRKEIANFQYDASTRSQMRNSLTLSQEEVQSLIESGHQYVVRAKIEPNEDIHVNDLIRGEVVINSSILDDKVLYKSADQLPTYHLANIVDDHLMEVTHVIRGEEWLPSAPLHVLLYRFFGWEDTMPSFAHLSLLLKPEGNGKLSKRDGDRLGFPVFPLEWHDPKTGDVSSGYRESGYFPEAVVNFLALLGWNPGNDQEVMSMDDLIRLFDLSRCSKSGAKFDYEKGRWFNHHYLLEKSNAEIADLFLPIVESHGIQTTHAYVEKVVGMMKGRVNFVSELWDLCSFFFIAPTEYDEKTRKKRWKEDSAVQLGEFIEQLRAREPFDVEGTENECKAWIESKGYHLGNIMNAARLALVGEGKGPGIFDITEALGKEESIRRIQRAIEILK.

The 'HIGH' region signature appears at 12 to 22; that stretch reads PSPTGALHIGG. The short motif at 260 to 264 is the 'KMSKS' region element; sequence KLSKR. An ATP-binding site is contributed by lysine 263.

The protein belongs to the class-I aminoacyl-tRNA synthetase family. Glutamate--tRNA ligase type 1 subfamily. As to quaternary structure, monomer.

It is found in the cytoplasm. It catalyses the reaction tRNA(Glu) + L-glutamate + ATP = L-glutamyl-tRNA(Glu) + AMP + diphosphate. Catalyzes the attachment of glutamate to tRNA(Glu) in a two-step reaction: glutamate is first activated by ATP to form Glu-AMP and then transferred to the acceptor end of tRNA(Glu). The polypeptide is Glutamate--tRNA ligase (Parabacteroides distasonis (strain ATCC 8503 / DSM 20701 / CIP 104284 / JCM 5825 / NCTC 11152)).